The following is an 802-amino-acid chain: LPS-assembly protein LptD (802 aa).

Positions 1-25 are cleaved as a signal peptide; that stretch reads MARLFSLKPLVLALGLCFGTHCAAA.

It belongs to the LptD family. Component of the lipopolysaccharide transport and assembly complex. Interacts with LptE and LptA.

The protein resides in the cell outer membrane. Functionally, together with LptE, is involved in the assembly of lipopolysaccharide (LPS) at the surface of the outer membrane. The polypeptide is LPS-assembly protein LptD (Neisseria meningitidis serogroup B (strain ATCC BAA-335 / MC58)).